The following is a 402-amino-acid chain: Beta-peptidyl aminopeptidase BapA (402 aa).

A signal peptide spans 1-29 (MTSTQRLWSGALPLLTALIVSIAATASLA). Catalysis depends on Ser279, which acts as the Nucleophile. Active-site proton donor/acceptor residues include Ser317 and Glu319.

The protein belongs to the peptidase S58 family. Heterooctamer of 4 heterodimers ((alpha:beta)4); each heterodimer is composed of an alpha subunit and a beta subunit processed from the same precursor. In terms of processing, autoproteolytic processing to generate the alpha and beta subunit is required for self-activation and is proposed to use a similar mechanism as substrate cleavage.

Its subcellular location is the periplasm. It catalyses the reaction Cleaves N-terminal beta-homoamino acids from peptides composed of 2 to 6 amino acids.. Its activity is regulated as follows. Inhibited by AEBSF (4-(2-aminoethyl)benzenesulfonyl fluoride, Pefabloc SC), ampicillin and AMP(hyd) (ampillicin-derived penicilloic acid). Functionally, beta-aminopeptidase that can cleave synthetic beta-peptides which consist of backbone-elongated beta-amino acid residues that are not processed by common proteolytic enzymes. Can cleave the beta-peptides beta-homoVal-beta-homoAla-beta-homoLeu and beta-homoAla-beta-homoLeu. Requires a beta-amino acid at the N-terminus of peptide substrates and cleaves the peptide bond between the N-terminal beta-amino acid and the amino acid at the second position of tripeptidic substrates of the general structure H-betahXaa-Ile-betahTyr-OH according to the following preferences with regard to the side chain of the N-terminal beta-amino acid: aliphatic and aromatic &gt; OH-containing &gt; hydrogen, basic and polar. In Sphingosinicella xenopeptidilytica, this protein is Beta-peptidyl aminopeptidase BapA.